The sequence spans 204 residues: Thiamine-phosphate synthase (204 aa).

4-amino-2-methyl-5-(diphosphooxymethyl)pyrimidine contacts are provided by residues 35-39 and asparagine 67; that span reads QVREK. Residues aspartate 68 and aspartate 87 each coordinate Mg(2+). Serine 106 is a binding site for 4-amino-2-methyl-5-(diphosphooxymethyl)pyrimidine. 132-134 is a binding site for 2-[(2R,5Z)-2-carboxy-4-methylthiazol-5(2H)-ylidene]ethyl phosphate; it reads TPT. Lysine 135 is a binding site for 4-amino-2-methyl-5-(diphosphooxymethyl)pyrimidine. Residues glycine 163 and 183–184 each bind 2-[(2R,5Z)-2-carboxy-4-methylthiazol-5(2H)-ylidene]ethyl phosphate; that span reads VS.

The protein belongs to the thiamine-phosphate synthase family. The cofactor is Mg(2+).

The enzyme catalyses 2-[(2R,5Z)-2-carboxy-4-methylthiazol-5(2H)-ylidene]ethyl phosphate + 4-amino-2-methyl-5-(diphosphooxymethyl)pyrimidine + 2 H(+) = thiamine phosphate + CO2 + diphosphate. It carries out the reaction 2-(2-carboxy-4-methylthiazol-5-yl)ethyl phosphate + 4-amino-2-methyl-5-(diphosphooxymethyl)pyrimidine + 2 H(+) = thiamine phosphate + CO2 + diphosphate. It catalyses the reaction 4-methyl-5-(2-phosphooxyethyl)-thiazole + 4-amino-2-methyl-5-(diphosphooxymethyl)pyrimidine + H(+) = thiamine phosphate + diphosphate. The protein operates within cofactor biosynthesis; thiamine diphosphate biosynthesis; thiamine phosphate from 4-amino-2-methyl-5-diphosphomethylpyrimidine and 4-methyl-5-(2-phosphoethyl)-thiazole: step 1/1. Functionally, condenses 4-methyl-5-(beta-hydroxyethyl)thiazole monophosphate (THZ-P) and 2-methyl-4-amino-5-hydroxymethyl pyrimidine pyrophosphate (HMP-PP) to form thiamine monophosphate (TMP). This chain is Thiamine-phosphate synthase, found in Vibrio campbellii (strain ATCC BAA-1116).